The primary structure comprises 280 residues: Putative ABC transporter ATP-binding protein PYRAB03730 (280 aa).

Positions 4 to 244 (IEVENVSFKY…VEFLERIGIR (241 aa)) constitute an ABC transporter domain. 38–45 (GPSGSGKS) provides a ligand contact to ATP.

Belongs to the ABC transporter superfamily.

The protein localises to the cell membrane. Probably part of an ABC transporter complex. Responsible for energy coupling to the transport system. In Pyrococcus abyssi (strain GE5 / Orsay), this protein is Putative ABC transporter ATP-binding protein PYRAB03730.